A 364-amino-acid polypeptide reads, in one-letter code: Histidinol-phosphate aminotransferase 1 (364 aa).

The residue at position 211 (lysine 211) is an N6-(pyridoxal phosphate)lysine.

This sequence belongs to the class-II pyridoxal-phosphate-dependent aminotransferase family. Histidinol-phosphate aminotransferase subfamily. As to quaternary structure, homodimer. Pyridoxal 5'-phosphate is required as a cofactor.

It carries out the reaction L-histidinol phosphate + 2-oxoglutarate = 3-(imidazol-4-yl)-2-oxopropyl phosphate + L-glutamate. The protein operates within amino-acid biosynthesis; L-histidine biosynthesis; L-histidine from 5-phospho-alpha-D-ribose 1-diphosphate: step 7/9. This chain is Histidinol-phosphate aminotransferase 1, found in Legionella pneumophila subsp. pneumophila (strain Philadelphia 1 / ATCC 33152 / DSM 7513).